The primary structure comprises 38 residues: Non-specific lipid-transfer protein P2 (38 aa).

The protein belongs to the plant LTP family.

Its subcellular location is the secreted. Its function is as follows. Plant non-specific lipid-transfer proteins transfer phospholipids as well as galactolipids across membranes. May play a role in wax or cutin deposition in the cell walls of expanding epidermal cells and certain secretory tissues. The protein is Non-specific lipid-transfer protein P2 of Vitis sp. (Grape).